Here is a 416-residue protein sequence, read N- to C-terminus: Glutamyl-tRNA reductase (416 aa).

Residues threonine 48–arginine 51, serine 104, glutamate 109–glutamine 111, and glutamine 115 each bind substrate. Cysteine 49 (nucleophile) is an active-site residue. Glycine 184–isoleucine 189 provides a ligand contact to NADP(+).

Belongs to the glutamyl-tRNA reductase family. As to quaternary structure, homodimer.

The catalysed reaction is (S)-4-amino-5-oxopentanoate + tRNA(Glu) + NADP(+) = L-glutamyl-tRNA(Glu) + NADPH + H(+). It functions in the pathway porphyrin-containing compound metabolism; protoporphyrin-IX biosynthesis; 5-aminolevulinate from L-glutamyl-tRNA(Glu): step 1/2. Catalyzes the NADPH-dependent reduction of glutamyl-tRNA(Glu) to glutamate 1-semialdehyde (GSA). The sequence is that of Glutamyl-tRNA reductase from Dechloromonas aromatica (strain RCB).